The sequence spans 285 residues: HTH-type transcriptional regulator MurR (285 aa).

In terms of domain architecture, HTH rpiR-type spans 1 to 77 (MLYLTKISNA…MALIGEYSAS (77 aa)). Positions 37–56 (SRQMAKQLGISQSSIVKFAQ) form a DNA-binding region, H-T-H motif. An SIS domain is found at 128–279 (IIEVISKAPF…SLKMIQRSSE (152 aa)).

In terms of assembly, homotetramer.

It functions in the pathway amino-sugar metabolism; N-acetylmuramate degradation [regulation]. Its function is as follows. Represses the expression of the murPQ operon involved in the uptake and degradation of N-acetylmuramic acid (MurNAc). Binds to two adjacent inverted repeats within the operator region. MurNAc 6-phosphate, the substrate of MurQ, is the specific inducer that weakens binding of MurR to the operator. In Shigella boydii serotype 4 (strain Sb227), this protein is HTH-type transcriptional regulator MurR.